The sequence spans 534 residues: NAD(P)H-quinone oxidoreductase chain 4 (534 aa).

The next 14 helical transmembrane spans lie at 12–32 (FPWL…IPFF), 44–64 (FALS…INGF), 96–116 (MPLI…AWPV), 120–140 (PKLF…VFAV), 144–164 (LLFF…LAIW), 176–196 (FIIY…AMGF), 220–240 (ILCY…VPLH), 251–271 (TAPV…YALL), 285–305 (FAPL…LTSF), 314–334 (IAYS…SFSS), 340–360 (AMLQ…LVGA), 384–404 (FALW…SGFV), 425–445 (VVMA…LLSM), and 472–492 (VYII…PRLV).

It belongs to the complex I subunit 4 family.

The protein localises to the cellular thylakoid membrane. The catalysed reaction is a plastoquinone + NADH + (n+1) H(+)(in) = a plastoquinol + NAD(+) + n H(+)(out). It catalyses the reaction a plastoquinone + NADPH + (n+1) H(+)(in) = a plastoquinol + NADP(+) + n H(+)(out). NDH-1 shuttles electrons from NAD(P)H, via FMN and iron-sulfur (Fe-S) centers, to quinones in the respiratory chain. The immediate electron acceptor for the enzyme in this species is believed to be plastoquinone. Couples the redox reaction to proton translocation (for every two electrons transferred, four hydrogen ions are translocated across the cytoplasmic membrane), and thus conserves the redox energy in a proton gradient. In Prochlorococcus marinus (strain MIT 9215), this protein is NAD(P)H-quinone oxidoreductase chain 4.